The chain runs to 147 residues: Small ribosomal subunit protein bS16m (147 aa).

This sequence belongs to the bacterial ribosomal protein bS16 family. In terms of assembly, component of the mitochondrial ribosome small subunit (28S) which comprises a 12S rRNA and about 30 distinct proteins.

It is found in the mitochondrion. The chain is Small ribosomal subunit protein bS16m (mrps-16) from Caenorhabditis elegans.